A 509-amino-acid polypeptide reads, in one-letter code: Maturase K (509 aa).

The protein belongs to the intron maturase 2 family. MatK subfamily.

Its subcellular location is the plastid. It localises to the chloroplast. In terms of biological role, usually encoded in the trnK tRNA gene intron. Probably assists in splicing its own and other chloroplast group II introns. The polypeptide is Maturase K (Vatairea macrocarpa).